A 129-amino-acid polypeptide reads, in one-letter code: Probable tautomerase YrdN (129 aa).

The Proton acceptor; via imino nitrogen role is filled by Pro2.

The protein belongs to the 4-oxalocrotonate tautomerase family.

Its function is as follows. Putative target of GltR. The chain is Probable tautomerase YrdN (yrdN) from Bacillus subtilis (strain 168).